The primary structure comprises 417 residues: METATRTHQQRKLISSFLDITVNQTVEIATQFLEATTWNLEDAINLFLIARRNPHHHHGEELVPLPLPSKKNTLYDYDPFMSHNTSVAVCPEEIWDDESTSEESDSRLSSLYRPPPSLFFHGSFEDAKATSSREDLWLLVNLQSTTEFASHLLNRDLWPHDAVFQAIKSSFILLQVYDDTSEGQKISTFYKIDSVPPVVLLIDPITGQKMRMWSGVIEPQGFLEDLMKYMDSGPHEHVASLTSNKRMKTEKISCSSNNADDQDMATFWGNAIEEEKTVIKSGKEETFTSDRVVAPSWGPEFEDIMTLSEHEEETCLSCDLLEFPVLTEEPKADCDRSVVCSICVRFPDGRRKQRKFLKSEPIQLLWSFCYSHMEESEKKEFKLVQAIPGASKTLDYGAKATFDQSGIANSMISVTWE.

The UBX domain occupies 335–415 (DRSVVCSICV…GIANSMISVT (81 aa)).

This chain is Putative plant UBX domain-containing protein 14, found in Arabidopsis thaliana (Mouse-ear cress).